Reading from the N-terminus, the 116-residue chain is Nascent polypeptide-associated complex protein (116 aa).

Residues 6 to 70 form the NAC-A/B domain; that stretch reads PKQMKDLERM…AREESKQQQK (65 aa).

The protein belongs to the NAC-alpha family. Homodimer. Interacts with the ribosome. Binds ribosomal RNA.

Its function is as follows. Contacts the emerging nascent chain on the ribosome. This is Nascent polypeptide-associated complex protein from Sulfolobus acidocaldarius (strain ATCC 33909 / DSM 639 / JCM 8929 / NBRC 15157 / NCIMB 11770).